The chain runs to 491 residues: Probable glycine dehydrogenase (decarboxylating) subunit 2 (491 aa).

Position 273 is an N6-(pyridoxal phosphate)lysine (Lys273).

Belongs to the GcvP family. C-terminal subunit subfamily. The glycine cleavage system is composed of four proteins: P, T, L and H. In this organism, the P 'protein' is a heterodimer of two subunits. It depends on pyridoxal 5'-phosphate as a cofactor.

The enzyme catalyses N(6)-[(R)-lipoyl]-L-lysyl-[glycine-cleavage complex H protein] + glycine + H(+) = N(6)-[(R)-S(8)-aminomethyldihydrolipoyl]-L-lysyl-[glycine-cleavage complex H protein] + CO2. Its function is as follows. The glycine cleavage system catalyzes the degradation of glycine. The P protein binds the alpha-amino group of glycine through its pyridoxal phosphate cofactor; CO(2) is released and the remaining methylamine moiety is then transferred to the lipoamide cofactor of the H protein. The chain is Probable glycine dehydrogenase (decarboxylating) subunit 2 from Bacillus cereus (strain ATCC 10987 / NRS 248).